The following is a 457-amino-acid chain: tRNA modification GTPase MnmE (457 aa).

Residues arginine 24, glutamate 81, and lysine 121 each contribute to the (6S)-5-formyl-5,6,7,8-tetrahydrofolate site. One can recognise a TrmE-type G domain in the interval 218-380; it reads GIKIVITGKP…LLKYLTKIIS (163 aa). Position 228 (asparagine 228) interacts with K(+). GTP-binding positions include 228 to 233, 247 to 253, 272 to 275, and 338 to 341; these read NVGKSS, TNIAGTT, DTAG, and NKAD. Serine 232 provides a ligand contact to Mg(2+). The K(+) site is built by threonine 247, isoleucine 249, and threonine 252. Threonine 253 provides a ligand contact to Mg(2+). Lysine 457 contributes to the (6S)-5-formyl-5,6,7,8-tetrahydrofolate binding site.

The protein belongs to the TRAFAC class TrmE-Era-EngA-EngB-Septin-like GTPase superfamily. TrmE GTPase family. As to quaternary structure, homodimer. Heterotetramer of two MnmE and two MnmG subunits. It depends on K(+) as a cofactor.

It is found in the cytoplasm. Its function is as follows. Exhibits a very high intrinsic GTPase hydrolysis rate. Involved in the addition of a carboxymethylaminomethyl (cmnm) group at the wobble position (U34) of certain tRNAs, forming tRNA-cmnm(5)s(2)U34. In Baumannia cicadellinicola subsp. Homalodisca coagulata, this protein is tRNA modification GTPase MnmE.